The sequence spans 136 residues: Large ribosomal subunit protein uL16 (136 aa).

It belongs to the universal ribosomal protein uL16 family. Part of the 50S ribosomal subunit.

Functionally, binds 23S rRNA and is also seen to make contacts with the A and possibly P site tRNAs. The chain is Large ribosomal subunit protein uL16 from Psychromonas ingrahamii (strain DSM 17664 / CCUG 51855 / 37).